Here is a 369-residue protein sequence, read N- to C-terminus: UPF0283 membrane protein RPA1583 (369 aa).

The segment at 1–61 (MTERVPPRRP…APPPPPPRAR (61 aa)) is disordered. The segment covering 34–51 (AKPSAKADARPAASAAGA) has biased composition (low complexity). The next 3 helical transmembrane spans lie at 90–110 (WGTVFWSAATGLVSLAFWLWI), 124–144 (LGTIGMVLALLAGGSLAIIIG), and 239–259 (VSLVTAISPKALIDVLFVAIA).

It belongs to the UPF0283 family.

It is found in the cell inner membrane. The sequence is that of UPF0283 membrane protein RPA1583 from Rhodopseudomonas palustris (strain ATCC BAA-98 / CGA009).